A 257-amino-acid chain; its full sequence is Imidazole glycerol phosphate synthase subunit HisF (257 aa).

Catalysis depends on residues aspartate 12 and aspartate 131.

It belongs to the HisA/HisF family. Heterodimer of HisH and HisF.

Its subcellular location is the cytoplasm. The catalysed reaction is 5-[(5-phospho-1-deoxy-D-ribulos-1-ylimino)methylamino]-1-(5-phospho-beta-D-ribosyl)imidazole-4-carboxamide + L-glutamine = D-erythro-1-(imidazol-4-yl)glycerol 3-phosphate + 5-amino-1-(5-phospho-beta-D-ribosyl)imidazole-4-carboxamide + L-glutamate + H(+). It functions in the pathway amino-acid biosynthesis; L-histidine biosynthesis; L-histidine from 5-phospho-alpha-D-ribose 1-diphosphate: step 5/9. IGPS catalyzes the conversion of PRFAR and glutamine to IGP, AICAR and glutamate. The HisF subunit catalyzes the cyclization activity that produces IGP and AICAR from PRFAR using the ammonia provided by the HisH subunit. This Mycobacteroides abscessus (strain ATCC 19977 / DSM 44196 / CCUG 20993 / CIP 104536 / JCM 13569 / NCTC 13031 / TMC 1543 / L948) (Mycobacterium abscessus) protein is Imidazole glycerol phosphate synthase subunit HisF.